The sequence spans 194 residues: MTNKDNPKFHTISTEYIDYLREADSKVPFNKDEQHSRPYVGVLEKINGHDYFVPLTSRNDKNFNSQVSVKLFDNDEKRIGVLLVNNMIPVPEKECKEIDIAEKTAADPQYGNLMLKQYLFLKENMDRVTNKVEKVYKDVTVQGKPSHKQKFLKGVCCDFPKLEEKCQEYKERDQAKERDKARRIAYMRQMGRER.

Residues 114-182 (MLKQYLFLKE…DQAKERDKAR (69 aa)) are a coiled coil. The span at 171–182 (ERDQAKERDKAR) shows a compositional bias: basic and acidic residues. The tract at residues 171–194 (ERDQAKERDKARRIAYMRQMGRER) is disordered.

It belongs to the ToxN/AbiQ toxin family. As to quaternary structure, one ToxN monomer binds to a 34-nt-long single repeat of the ToxI RNA; this complex forms a triangular heterohexameric complex with ToxN connected by the ToxI RNA to another toxin molecule. The ToxI repeats are cleavage products of their precursor. The ToxI repeat forms a pseudoknot which occludes the toxin active site.

In terms of biological role, toxic component of a type III toxin-antitoxin (TA) system. An endoribonuclease which cleaves between the first and second A of AAAAA sequences; it tolerates other nucleotides in positions +2 and +4 of the consensus. Digests cognate antitoxin RNA ToxI as shown by the 2'-3'-cyclic phosphate at the 3' end of the 34-nt repeats and probably other RNAs. Inhibits growth when expressed in E.coli without causing cell lysis; this bacteriostatic effect is neutralized by cognate RNA antitoxin ToxI, which has 2.9 nearly identical 34 nucleotide-long repeats. Non-cognate antitoxin RNA from P.atrosepticum does not inhibit this toxin. The toxin-antitoxin pair function in plasmid maintenance (a plasmid addiction system), but unlike its P.atrosepticum homolog it is not seen to confer resistance to bacteriophages. The sequence is that of Endoribonuclease ToxN from Bacillus thuringiensis subsp. kurstaki.